Consider the following 234-residue polypeptide: Glutamine synthetase (234 aa).

In terms of domain architecture, GS catalytic spans Lys1–Leu234. A disordered region spans residues Gly126–Arg157.

This sequence belongs to the glutamine synthetase family. In terms of assembly, homooctamer.

The protein localises to the cytoplasm. The enzyme catalyses L-glutamate + NH4(+) + ATP = L-glutamine + ADP + phosphate + H(+). The sequence is that of Glutamine synthetase from Dunaliella salina (Green alga).